The sequence spans 216 residues: SPbeta prophage-derived uncharacterized protein YomX (216 aa).

The sequence is that of SPbeta prophage-derived uncharacterized protein YomX (yomX) from Bacillus subtilis (strain 168).